The sequence spans 204 residues: MSTQTLRVGIGGPVGSGKTALVARLCQELRERFNIAVVTNDIYTEEDAQFLIRHQALTEDRIIGVETGGCPHTAIREDASMNLAAIDTLTARHPGLDLVLVESGGDNLSATFSPELSDLTLYVIDVSAGDKIPRKGGPGITKSDLLIINKTDLAPIVGASLEVMDRDARKMRGDKPFIFSNMKTGEGLQDIIRFIIDQGMLQAA.

Position 12–19 (Gly12–Thr19) interacts with GTP.

This sequence belongs to the SIMIBI class G3E GTPase family. UreG subfamily. As to quaternary structure, homodimer. UreD, UreF and UreG form a complex that acts as a GTP-hydrolysis-dependent molecular chaperone, activating the urease apoprotein by helping to assemble the nickel containing metallocenter of UreC. The UreE protein probably delivers the nickel.

The protein resides in the cytoplasm. Facilitates the functional incorporation of the urease nickel metallocenter. This process requires GTP hydrolysis, probably effectuated by UreG. This chain is Urease accessory protein UreG, found in Hahella chejuensis (strain KCTC 2396).